Reading from the N-terminus, the 213-residue chain is T-cell surface glycoprotein CD8 beta chain (213 aa).

A signal peptide spans 1–21 (MQPWLWLVFSMKLAALWSSSA). The region spanning 22 to 133 (LIQTPSSLLV…KMVFGTGTKL (112 aa)) is the Ig-like V-type domain. The Extracellular portion of the chain corresponds to 22–175 (LIQTPSSLLV…QKGLTCSLTT (154 aa)). N-linked (GlcNAc...) asparagine glycosylation is present at asparagine 34. Cysteine 41 and cysteine 117 are oxidised to a cystine. Residues 176 to 196 (LSLLVVCILLLLAFLGVAVYF) form a helical membrane-spanning segment. Topologically, residues 197-213 (YCVRRRARIHFMKQFHK) are cytoplasmic.

As to quaternary structure, forms disulfide-linked heterodimers with CD8A at the cell surface. Interacts with CD3D; this interaction couples TCR-CD3 with CD8. Interacts with LCK. In terms of processing, palmitoylated at the cytoplasmic tail and thereby targets the heterodimer CD8A/CD8B to lipid rafts unlike CD8A homodimers.

Its subcellular location is the membrane. Integral membrane glycoprotein that plays an essential role in the immune response and serves multiple functions in responses against both external and internal offenses. In T-cells, functions primarily as a coreceptor for MHC class I molecule:peptide complex. The antigens presented by class I peptides are derived from cytosolic proteins while class II derived from extracellular proteins. Interacts simultaneously with the T-cell receptor (TCR) and the MHC class I proteins presented by antigen presenting cells (APCs). In turn, recruits the Src kinase LCK to the vicinity of the TCR-CD3 complex. A palmitoylation site in the cytoplasmic tail of CD8B chain contributes to partitioning of CD8 into the plasma membrane lipid rafts where signaling proteins are enriched. Once LCK recruited, it initiates different intracellular signaling pathways by phosphorylating various substrates ultimately leading to lymphokine production, motility, adhesion and activation of cytotoxic T-lymphocytes (CTLs). Additionally, plays a critical role in thymic selection of CD8+ T-cells. In Mus musculus (Mouse), this protein is T-cell surface glycoprotein CD8 beta chain (Cd8b).